Here is a 228-residue protein sequence, read N- to C-terminus: GDT1-like protein 5 (228 aa).

N-acetylglycine is present on glycine 2. Helical transmembrane passes span 12–32 (LAMT…AILA), 39–59 (LVLA…ATLG), 71–91 (THHI…WDGF), 133–153 (PFLT…NFFG), 173–193 (LGVV…AVLG), and 205–225 (IVAL…LLTP).

The protein belongs to the GDT1 family.

The protein localises to the membrane. The protein is GDT1-like protein 5 of Arabidopsis thaliana (Mouse-ear cress).